Consider the following 300-residue polypeptide: Recombination-associated protein RdgC (300 aa).

It belongs to the RdgC family.

It is found in the cytoplasm. The protein resides in the nucleoid. Functionally, may be involved in recombination. This is Recombination-associated protein RdgC from Herminiimonas arsenicoxydans.